Reading from the N-terminus, the 481-residue chain is tRNA pseudouridine(38/39) synthase (481 aa).

Position 2 is an N-acetylalanine (alanine 2). Residues 29-40 are compositionally biased toward basic and acidic residues; the sequence is KKEQANNKDSNI. The segment at 29–54 is disordered; that stretch reads KKEQANNKDSNIRENSSGAGGKPKRA. Aspartate 118 functions as the Nucleophile in the catalytic mechanism. Tyrosine 195 contributes to the substrate binding site. Threonine 456 carries the post-translational modification Phosphothreonine.

Belongs to the tRNA pseudouridine synthase TruA family.

It is found in the nucleus. It catalyses the reaction uridine(38/39) in tRNA = pseudouridine(38/39) in tRNA. Its function is as follows. Formation of pseudouridine at position 39 in the anticodon stem and loop of transfer RNAs. The protein is tRNA pseudouridine(38/39) synthase (PUS3) of Bos taurus (Bovine).